The following is a 918-amino-acid chain: DNA repair and recombination protein RAD54B (918 aa).

The span at 1–11 shows a compositional bias: polar residues; it reads MRRSAAPSQVL. The segment at 1-29 is disordered; sequence MRRSAAPSQVLGNVAKKPRFIPPGKSNAL. Residues 320 to 487 form the Helicase ATP-binding domain; the sequence is GMRVSGRFGA…YALIEFVNPG (168 aa). 333–340 is an ATP binding site; sequence DEMGLGKT. Residues 438-441 carry the DEGH box motif; that stretch reads DEGH. A Helicase C-terminal domain is found at 653–817; that stretch reads VLVKLLAAIR…HIHFSVEELR (165 aa). The segment at 842-873 is disordered; sequence KDHQNPSSKKPSVSRCCQLRQDQGKHNSKKPL.

It belongs to the SNF2/RAD54 helicase family.

The protein localises to the nucleus. In terms of biological role, involved in DNA repair and mitotic recombination. In Gallus gallus (Chicken), this protein is DNA repair and recombination protein RAD54B (RAD54B).